Consider the following 65-residue polypeptide: Large ribosomal subunit protein bL35 (65 aa).

Positions 1–30 (MPKMKTNRGAAKRFRKTASGRFKSKQSHLR) are disordered. The span at 10–30 (AAKRFRKTASGRFKSKQSHLR) shows a compositional bias: basic residues.

Belongs to the bacterial ribosomal protein bL35 family.

The sequence is that of Large ribosomal subunit protein bL35 from Pseudoalteromonas atlantica (strain T6c / ATCC BAA-1087).